The following is a 192-amino-acid chain: Anthranilate synthase component 2 (192 aa).

Residues 3–192 (NILLLDNIDS…LQRVIQWTKI (190 aa)) enclose the Glutamine amidotransferase type-1 domain. 57–59 (GPG) serves as a coordination point for L-glutamine. The Nucleophile; for GATase activity role is filled by Cys-84. L-glutamine is bound by residues Gln-88 and 134–135 (SL). Residues His-170 and Glu-172 each act as for GATase activity in the active site.

Heterotetramer consisting of two non-identical subunits: a beta subunit (TrpG) and a large alpha subunit (TrpE).

The enzyme catalyses chorismate + L-glutamine = anthranilate + pyruvate + L-glutamate + H(+). The protein operates within amino-acid biosynthesis; L-tryptophan biosynthesis; L-tryptophan from chorismate: step 1/5. In terms of biological role, part of a heterotetrameric complex that catalyzes the two-step biosynthesis of anthranilate, an intermediate in the biosynthesis of L-tryptophan. In the first step, the glutamine-binding beta subunit (TrpG) of anthranilate synthase (AS) provides the glutamine amidotransferase activity which generates ammonia as a substrate that, along with chorismate, is used in the second step, catalyzed by the large alpha subunit of AS (TrpE) to produce anthranilate. In the absence of TrpG, TrpE can synthesize anthranilate directly from chorismate and high concentrations of ammonia. This Buchnera aphidicola subsp. Baizongia pistaciae (strain Bp) protein is Anthranilate synthase component 2 (trpG).